The sequence spans 205 residues: Large ribosomal subunit protein uL3 (205 aa).

This sequence belongs to the universal ribosomal protein uL3 family. As to quaternary structure, part of the 50S ribosomal subunit. Forms a cluster with proteins L14 and L19.

Functionally, one of the primary rRNA binding proteins, it binds directly near the 3'-end of the 23S rRNA, where it nucleates assembly of the 50S subunit. The protein is Large ribosomal subunit protein uL3 of Flavobacterium johnsoniae (strain ATCC 17061 / DSM 2064 / JCM 8514 / BCRC 14874 / CCUG 350202 / NBRC 14942 / NCIMB 11054 / UW101) (Cytophaga johnsonae).